Consider the following 271-residue polypeptide: Regulatory protein RecX (271 aa).

This sequence belongs to the RecX family.

Its subcellular location is the cytoplasm. Its function is as follows. Modulates RecA activity. The sequence is that of Regulatory protein RecX from Lactobacillus johnsonii (strain CNCM I-12250 / La1 / NCC 533).